The chain runs to 129 residues: Protein HMF1 (129 aa).

A Glycyl lysine isopeptide (Lys-Gly) (interchain with G-Cter in ubiquitin) cross-link involves residue Lys52.

Belongs to the RutC family.

It is found in the cytoplasm. The protein resides in the nucleus. It localises to the mitochondrion intermembrane space. This chain is Protein HMF1 (HMF1), found in Saccharomyces cerevisiae (strain ATCC 204508 / S288c) (Baker's yeast).